Reading from the N-terminus, the 85-residue chain is Exodeoxyribonuclease 7 small subunit (85 aa).

The protein belongs to the XseB family. Heterooligomer composed of large and small subunits.

Its subcellular location is the cytoplasm. It catalyses the reaction Exonucleolytic cleavage in either 5'- to 3'- or 3'- to 5'-direction to yield nucleoside 5'-phosphates.. Its function is as follows. Bidirectionally degrades single-stranded DNA into large acid-insoluble oligonucleotides, which are then degraded further into small acid-soluble oligonucleotides. The protein is Exodeoxyribonuclease 7 small subunit of Mycobacterium bovis (strain ATCC BAA-935 / AF2122/97).